The following is a 610-amino-acid chain: Zinc metalloproteinase-disintegrin-like VAP1 (610 aa).

Residues 1–20 form the signal peptide; the sequence is MIQVLLVTISLAVFPYQGSS. Residues 21–189 constitute a propeptide that is removed on maturation; the sequence is VILESGNVND…KKASQSNLTP (169 aa). At Glu-190 the chain carries Pyrrolidone carboxylic acid (Glu). The region spanning 199 to 395 is the Peptidase M12B domain; the sequence is KYVKLFLVAD…NMPQCILKKP (197 aa). Asn-218 carries N-linked (GlcNAc...) asparagine glycosylation. 3 cysteine pairs are disulfide-bonded: Cys-310–Cys-390, Cys-350–Cys-374, and Cys-352–Cys-357. Zn(2+) is bound at residue His-335. The Metal-binding motif lies at 335–346; sequence HEMGHNLGMDHD. The Proton acceptor role is filled by Glu-336. Zn(2+)-binding residues include His-339 and His-345. One can recognise a Disintegrin domain in the interval 403-488; that stretch reads PAVCGNYFVE…AECTDRFQRN (86 aa). Residues Val-405, Asn-408, Phe-410, Glu-412, Glu-415, and Asp-418 each contribute to the Ca(2+) site. Intrachain disulfides connect Cys-406–Cys-435, Cys-417–Cys-430, Cys-419–Cys-425, Cys-429–Cys-452, Cys-443–Cys-449, Cys-448–Cys-474, Cys-461–Cys-481, Cys-468–Cys-499, Cys-492–Cys-504, Cys-511–Cys-561, Cys-526–Cys-572, Cys-539–Cys-549, Cys-556–Cys-598, and Cys-592–Cys-603. The short motif at 467–469 is the D/ECD-tripeptide element; it reads ECD. Asp-469, Met-470, Asp-472, Asp-483, and Arg-484 together coordinate Ca(2+).

Belongs to the venom metalloproteinase (M12B) family. P-III subfamily. P-IIIc sub-subfamily. Homodimer; disulfide-linked. It depends on Zn(2+) as a cofactor. The N-terminus is blocked. As to expression, expressed by the venom gland.

The protein localises to the secreted. Its activity is regulated as follows. Inhibited by EDTA and EGTA, but not by PMSF. Its function is as follows. Zinc metalloprotease that has fibrinogenolytic and hemorrhagic activities. It induces apoptosis in vascular endothelial cells (VEC), without degrading extracellular matrix (it cannot cleave collagen) or inhibiting adhesion of VEC. VAP1-induced apoptosis is inhibited by antibodies for integrin alpha-3, alpha-6, beta-1 and CD9. Apoptosis is accompanied by severe cell fragmentation, which is controlled by caspases. This chain is Zinc metalloproteinase-disintegrin-like VAP1, found in Crotalus atrox (Western diamondback rattlesnake).